The primary structure comprises 655 residues: FYVE, RhoGEF and PH domain-containing protein 2 (655 aa).

Phosphoserine occurs at positions 11 and 48. The tract at residues 18 to 64 is disordered; sequence VFENSRTPEAAPRGQRLEDVHHRPECRPPESPGPREKTNVGEAVGSE. A compositionally biased stretch (basic and acidic residues) spans 32 to 56; the sequence is QRLEDVHHRPECRPPESPGPREKTN. The 189-residue stretch at 102–290 folds into the DH domain; the sequence is PEKKIVQELL…FSAAQHSNAA (189 aa). The 100-residue stretch at 319 to 418 folds into the PH 1 domain; sequence TLLREGPVLK…WMQAFQAAID (100 aa). The FYVE-type zinc-finger motif lies at 458–518; the sequence is DKMVTMCMRC…VCLHCYAFLT (61 aa). Residues cysteine 464, cysteine 467, cysteine 481, cysteine 484, cysteine 489, cysteine 492, cysteine 510, and cysteine 513 each coordinate Zn(2+). The region spanning 544–641 is the PH 2 domain; it reads QSLMCSFLQL…WVKAMERAAS (98 aa). Serine 654 carries the phosphoserine modification.

It localises to the cytoplasm. It is found in the cytoskeleton. The protein resides in the nucleus. The protein localises to the early endosome. Its subcellular location is the early endosome membrane. It localises to the cell projection. It is found in the ruffle membrane. Its function is as follows. Activates CDC42, a member of the Ras-like family of Rho- and Rac proteins, by exchanging bound GDP for free GTP. Activates JNK1 via CDC42 but not RAC1. Binds to phosphatidylinositol 4,5-bisphosphate, phosphatidylinositol 3,4,5-trisphosphate, phosphatidylinositol 5-monophosphate, phosphatidylinositol 4-monophosphate and phosphatidylinositol 3-monophosphate. This Homo sapiens (Human) protein is FYVE, RhoGEF and PH domain-containing protein 2 (FGD2).